A 383-amino-acid chain; its full sequence is Succinyl-diaminopimelate desuccinylase (383 aa).

Residue His73 coordinates Zn(2+). Asp75 is a catalytic residue. Asp107 contributes to the Zn(2+) binding site. The Proton acceptor role is filled by Glu141. Positions 142, 170, and 356 each coordinate Zn(2+).

Belongs to the peptidase M20A family. DapE subfamily. Homodimer. Zn(2+) serves as cofactor. Co(2+) is required as a cofactor.

It carries out the reaction N-succinyl-(2S,6S)-2,6-diaminopimelate + H2O = (2S,6S)-2,6-diaminopimelate + succinate. It functions in the pathway amino-acid biosynthesis; L-lysine biosynthesis via DAP pathway; LL-2,6-diaminopimelate from (S)-tetrahydrodipicolinate (succinylase route): step 3/3. In terms of biological role, catalyzes the hydrolysis of N-succinyl-L,L-diaminopimelic acid (SDAP), forming succinate and LL-2,6-diaminopimelate (DAP), an intermediate involved in the bacterial biosynthesis of lysine and meso-diaminopimelic acid, an essential component of bacterial cell walls. The chain is Succinyl-diaminopimelate desuccinylase from Pseudomonas entomophila (strain L48).